Here is a 95-residue protein sequence, read N- to C-terminus: Microcin E492 immunity protein (95 aa).

A run of 3 helical transmembrane segments spans residues 1–21 (MTLL…FCII), 35–55 (VIVL…TKVY), and 67–87 (YLFC…ILTI).

The protein belongs to the MceB microcin immunity protein family.

It localises to the cell inner membrane. Functionally, protect the producing cell against microcin E492. This is Microcin E492 immunity protein from Klebsiella pneumoniae.